The following is a 1807-amino-acid chain: MRYCTIPPVHSPIIRLQHGILSKMKLIYFSNEFPPDDLHTLFRELHNHSKDRRHPILARFLEEATLAVREEVRRLPAHLRALIPPFESIWNFADFADLRKGQLCGSIDGILLCSVELGTLIRYYENNPDAFNLETGGTILAGLGIGLLATAAVSLASTVADLPITGAQVIRQAFRLGILVDEVSQNLQPRDATDTSTPDSWAYVLPNVSASEVQQELDTMQGIVKTPEASKIFISALSATAVTISGPPARLQAMFRTSQFFHDHKSVALPVYGGLCHAKHIYTVEDVHHIVRTSSMALLDSKFSPQLPIHSTSTGAPFPAVNATELFEHIIGEILMRAIQWDKVIQGVAQLAQDVGATRCEIVVFRNSLPIHDLAAALKTIPGLETSTQEIIPWVHSKPPAGEGGPRGPLQSKIAIVGMSCRMPGGATDTEKFWELLESGLDVHRKIPADRFDVDSHYDPAGKRLNASHTPYGCFIDEPGLFDAPFFNMSPREAQQTDPMQRLALVTAYEALERAGYVANRTAATDLHRIGTFYGQASDDYREVNSAQEISTYFIPGGCRAFGPGRINYFFKFSGPSYSIDTACSSSLATIQTACAALWNGDVDTAVAGGTNVLTNSDAFAGLSHGHFLSKTPNACKTWDCNADGYCRADAVGSIVMKRLEDAEADNDNILGVILAAATNHSAEAISITHPHAGHQAYLGKLVANRAGIDPLDVGFVEMHGTGTQAGDAEEIQSVTNAYAPTTRRRTAKNPLYIGAVKSNVGHSEAAAGVTAMLKVLLMFQKNAIPPHVGIKTGLNPIFPNDLDKRQVRIPYERTEWPHVPGKKRVAVVNNFSAAGGNTTILLEEGPVQEATETDPRSTHVVAVSAKSKISLKGNIERILAYLEQHPDASLANLSYSTTARRYHHNHRVAIAASGIAQVKKQLQSALDSVDSHKPIPTTGAPPVAFTFTGQGASYKSYNLELFSSSPYFRSQILHLDAIAQGQGFASFLPVIDGSHQRDHQHSQVMTQLALVCTEIAIAKYWGSLGVKPDVVIGHSLGEYAALHIAGVLSASDTIFLVGQRAALLEKKCKVGSHNMVAVRASLAQIEASAGKYPYEIACINGPKETVLSGPTTEMDAIIPVLEGDGHKCYRLEVAFAFHSAQTDPILDGFEALANSGVLFQAPQIPVISPLLCKVIFDDKSVNARYVRRATREPVNFLSALEIARDIGIVDDETAWIEIGPHPVCVGFIKSTLSPVNVAVPSLRRGDDNYTTMAQSLAALHCAGVKVEWSEFHRPFEAALRLLDLPTYAWNDKTYWIQYIGDWALTKGNTFYDKEKGLNSAPAALPTPKSSISTSTVHQIIQESIDGEAGTVVMQSDLMQADFRAAAWGHKMNQCGVVTSSVHADIAYTLGEYLYKKLKPKSKQVHMNIANLEVLKGLIANKNPESHQLIQVSVTTSDIGSNTAELTWYNVHADGTVDEPFASATLIYGDPSEWLSSWIPMTHLVQGRIHELERLAESGVANRFNHQMAYLLFANSLVDYAAKYRGMQSVVLHELEAFADVVLSTESGGRWTVPPYFIDSVAHLAGFVLNVSDAMDTQNNFCITPGWRSMRLARPLVAGGRYRSYVKMIPTAEDPSVYLGDVYVLQDGVVVGMVGGIQFRRYPRILLSRFFSAPDDAHAPPVATSTSSKHAVATPATKGVNGVKAVKAAPAVNGTNGVKTVPAVNGTNGVKATPAVNGVKPAPPVEVEVNSDTTTAKAIQIIAAESGLDLADLTDDSSFADLGVDSLMSLVIAEKFRADLGVVVGGSLFLEYPTIGDLRSWLEEYYS.

The segment at 41–173 (LFRELHNHSK…ITGAQVIRQA (133 aa)) is N-terminal acylcarrier protein transacylase domain (SAT). Positions 411–845 (QSKIAIVGMS…GGNTTILLEE (435 aa)) constitute a Ketosynthase family 3 (KS3) domain. Residues Cys584, His720, and His763 each act as for beta-ketoacyl synthase activity in the active site. Positions 946-1265 (FTFTGQGASY…SLAALHCAGV (320 aa)) are malonyl-CoA:ACP transacylase (MAT) domain. Residues 1334 to 1653 (TSTVHQIIQE…RILLSRFFSA (320 aa)) form a product template (PT) domain region. The interval 1338 to 1473 (HQIIQESIDG…ATLIYGDPSE (136 aa)) is N-terminal hotdog fold. The 311-residue stretch at 1338–1648 (HQIIQESIDG…FRRYPRILLS (311 aa)) folds into the PKS/mFAS DH domain. His1370 functions as the Proton acceptor; for dehydratase activity in the catalytic mechanism. Positions 1500–1648 (VANRFNHQMA…FRRYPRILLS (149 aa)) are C-terminal hotdog fold. Residue Asp1559 is the Proton donor; for dehydratase activity of the active site. One can recognise a Carrier domain in the interval 1732-1806 (DTTTAKAIQI…DLRSWLEEYY (75 aa)). The residue at position 1766 (Ser1766) is an O-(pantetheine 4'-phosphoryl)serine.

The enzyme catalyses holo-[ACP] + 8 malonyl-CoA + 8 H(+) = atrochrysone carboxyl-[ACP] + 8 CO2 + 8 CoA + 2 H2O. It participates in secondary metabolite biosynthesis. Functionally, non-reducing polyketide synthase; part of the gene cluster that mediates the biosynthesis of agnestins, dihydroxy-xanthone metabolites. The pathway begins with the assembly and cyclization of atrochrysone thioester by the non-reducing polyketide synthase Agnpks1. The atrochrysone carboxyl ACP thioesterase AgnL7 then breaks the thioester bond and releases the atrochrysone carboxylic acid as the first enzyme-free intermediate. The decarboxylase AgnL1 then catalyzes the concerted decarboxylation-elimination required to convert atochrysone carboxylic acid into emodin anthrone, which is further oxidized to emodin by the anthrone oxygenase AgnL2. Emodin then undergoes reduction catalyzed by the oxidoreductase AgnL4 to yield the dihydroquinone tautomer which is the substrate for reduction by the short chain dehydrogenase AgnL6 reduction to produce hydroxyketone, followed by AgnL8 dehydration and likely spontaneous autoxidation to chrysophanol. Baeyer-Villiger oxidation by the oxidase AgnL3 leads to monodictyphenone via cleavage of the C-10/C-10a bond of chrysophanol. Alternative cleavage at the C-4a/C-10 bond of chrysophanol also leads to the formation some cephalone F. Further conversion to agnestins A and B, requires reduction to dihydro-monodictyphenone, oxidation to agnestin C probably via an epoxide, and rearrangement to either agnestin A or agnestin B directly, although agnestin A or agnestin B can also interconvert. Within the cluster, AgnR1 is the only unassigned oxidoreductase present which could be involved in this conversion. However, AgnR1 seems not to be involved in this step, and thus genes involved in the proposed oxidation/reduction may be located elsewhere on the genome. Further agnestin A derivatives are probably formed by spontaneous decarboxylations, dehydrations and methanolysis reactions. In Paecilomyces divaricatus (Penicillium divaricatum), this protein is Atrochrysone carboxylic acid synthase Agnpks1.